The primary structure comprises 364 residues: GMP reductase (364 aa).

Residues 26–27, Lys-78, 132–134, and 183–184 each bind NADP(+); these read SR, DVA, and IG. K(+)-binding residues include Gly-184, Gly-186, and Cys-189. Cys-189 serves as the catalytic Thioimidate intermediate. Thr-191 (proton donor/acceptor) is an active-site residue. Arg-192 contributes to the K(+) binding site. Residues 222-224, 245-246, 271-273, and 289-293 each bind GMP; these read DGG, GG, GMS, and RASEG. Residues Met-272, 288–289, and 317–320 contribute to the NADP(+) site; these read YR and SACT.

It belongs to the IMPDH/GMPR family. GuaC type 1 subfamily. As to quaternary structure, homotetramer.

The catalysed reaction is IMP + NH4(+) + NADP(+) = GMP + NADPH + 2 H(+). In terms of biological role, catalyzes the irreversible NADPH-dependent deamination of GMP to IMP. It functions in the conversion of nucleobase, nucleoside and nucleotide derivatives of G to A nucleotides, and in maintaining the intracellular balance of A and G nucleotides. The protein is GMP reductase (gmr-1) of Onchocerca volvulus.